Consider the following 632-residue polypeptide: Polyadenylate-binding protein, cytoplasmic and nuclear (632 aa).

A compositionally biased stretch (polar residues) spans 1–11; the sequence is MSAADANQLQE. Residues 1-43 are disordered; that stretch reads MSAADANQLQESLEKLNLDSAPAAAEEEAVAAESAPAGEEGAD. Over residues 31–43 the composition is skewed to low complexity; the sequence is AAESAPAGEEGAD. RRM domains are found at residues 52 to 130, 140 to 217, 233 to 310, and 336 to 413; these read ASLY…WSQR, GNIF…KHIS, TNIY…RAQK, and VNLF…LAQR. The PABC domain occupies 534-615; it reads QQRDLAAIIA…ALTAFEEYKN (82 aa).

Belongs to the polyadenylate-binding protein type-1 family.

Its subcellular location is the cytoplasm. It is found in the nucleus. In terms of biological role, binds the poly(A) tail of mRNA. Appears to be an important mediator of the multiple roles of the poly(A) tail in mRNA biogenesis, stability and translation. In the nucleus, involved in both mRNA cleavage and polyadenylation. Is also required for efficient mRNA export to the cytoplasm. Acts in concert with a poly(A)-specific nuclease (PAN) to affect poly(A) tail shortening, which may occur concomitantly with either nucleocytoplasmic mRNA transport or translational initiation. In the cytoplasm, stimulates translation initiation and regulates mRNA decay through translation termination-coupled poly(A) shortening, probably mediated by PAN. The chain is Polyadenylate-binding protein, cytoplasmic and nuclear (PAB1) from Scheffersomyces stipitis (strain ATCC 58785 / CBS 6054 / NBRC 10063 / NRRL Y-11545) (Yeast).